Consider the following 198-residue polypeptide: MVNGPAELRRKLVIVGDGACGKTCLLIVFSKGTFPEVYVPTVFENYVADVEVDGRKVELALWDTAGQEDYDRLRPLSYPDSNVILICFSVDSPDSLDNVLEKWISEVLHFCQGVPIILVGCKSDLRDDPHTIEALRQQQQQPVSTSEGQQVAQRIGAADYLECSAKTGRGVREVFEAATRASLRVKEKKEKKKKCVVL.

16 to 23 (GDGACGKT) provides a ligand contact to GTP. An Effector region motif is present at residues 38–46 (YVPTVFENY). GTP-binding positions include 63-67 (DTAGQ) and 121-124 (CKSD). Cys-195 bears the Cysteine methyl ester mark. Cys-195 carries the S-geranylgeranyl cysteine lipid modification. Positions 196 to 198 (VVL) are cleaved as a propeptide — removed in mature form.

Belongs to the small GTPase superfamily. Rho family.

It is found in the cell membrane. This is GTP-binding protein RHO1 (RHO1) from Candida albicans (strain SC5314 / ATCC MYA-2876) (Yeast).